The chain runs to 192 residues: dTTP/UTP pyrophosphatase (192 aa).

Aspartate 68 serves as the catalytic Proton acceptor.

This sequence belongs to the Maf family. YhdE subfamily. A divalent metal cation is required as a cofactor.

Its subcellular location is the cytoplasm. It catalyses the reaction dTTP + H2O = dTMP + diphosphate + H(+). The enzyme catalyses UTP + H2O = UMP + diphosphate + H(+). Its function is as follows. Nucleoside triphosphate pyrophosphatase that hydrolyzes dTTP and UTP. May have a dual role in cell division arrest and in preventing the incorporation of modified nucleotides into cellular nucleic acids. The chain is dTTP/UTP pyrophosphatase from Cereibacter sphaeroides (strain ATCC 17023 / DSM 158 / JCM 6121 / CCUG 31486 / LMG 2827 / NBRC 12203 / NCIMB 8253 / ATH 2.4.1.) (Rhodobacter sphaeroides).